Reading from the N-terminus, the 442-residue chain is Probable folate-biopterin transporter 7 (442 aa).

A run of 12 helical transmembrane segments spans residues 23-43 (LGFG…ANFF), 64-82 (LPMV…VYFF), 87-107 (IPYI…IAFL), 114-134 (ILAL…VEVA), 158-178 (FVWM…GIAI), 184-204 (QSTF…TINI), 241-261 (IAWI…MFFY), 270-290 (ASLL…WGFA), 302-322 (KLLT…LLFV), 335-355 (VYVL…ILPF), 379-399 (IALA…FVGV), and 410-430 (GLAI…WIYD).

It belongs to the major facilitator superfamily. Folate-biopterin transporter (TC 2.A.71) family.

The protein resides in the membrane. Could mediate folate transport. In Arabidopsis thaliana (Mouse-ear cress), this protein is Probable folate-biopterin transporter 7.